The primary structure comprises 323 residues: MEVNISMPLNGSEVVFYDSTTSRVLWILSLVVLFITFVLGVLGNGLVIWVAGFQMAHTVTTVSYLNLALSDLSFMATLPLHIISMVMRGKWLFGWFLCKLVHIIANINLFVSIFLITLIAMDRCICVLCPVWSQNHRTVSLARKVVLGAWIFALLLTLPHFLFLTTVRDARGDVYCISKFESWVATSEEQLKVSVIAATASGIINFIIGFSMPMSFIAICYGLMAAKICRRGFVNSSRPLRVLTAVAVSFFVCWFPFQLIMLLGNIFNNETLSIIHMLVNPANTLASFNSCLNPILYVFLGQEFRDRLIYSLYASLERALRED.

At 1–29 (MEVNISMPLNGSEVVFYDSTTSRVLWILS) the chain is on the extracellular side. 2 N-linked (GlcNAc...) asparagine glycosylation sites follow: Asn-4 and Asn-10. The chain crosses the membrane as a helical span at residues 30-50 (LVVLFITFVLGVLGNGLVIWV). At 51 to 66 (AGFQMAHTVTTVSYLN) the chain is on the cytoplasmic side. The helical transmembrane segment at 67–87 (LALSDLSFMATLPLHIISMVM) threads the bilayer. At 88–99 (RGKWLFGWFLCK) the chain is on the extracellular side. The cysteines at positions 98 and 176 are disulfide-linked. The helical transmembrane segment at 100 to 120 (LVHIIANINLFVSIFLITLIA) threads the bilayer. The Cytoplasmic portion of the chain corresponds to 121 to 144 (MDRCICVLCPVWSQNHRTVSLARK). The helical transmembrane segment at 145–165 (VVLGAWIFALLLTLPHFLFLT) threads the bilayer. Over 166–202 (TVRDARGDVYCISKFESWVATSEEQLKVSVIAATASG) the chain is Extracellular. Residues 203–223 (IINFIIGFSMPMSFIAICYGL) form a helical membrane-spanning segment. Topologically, residues 224–241 (MAAKICRRGFVNSSRPLR) are cytoplasmic. The helical transmembrane segment at 242–262 (VLTAVAVSFFVCWFPFQLIML) threads the bilayer. Residues 263 to 280 (LGNIFNNETLSIIHMLVN) are Extracellular-facing. Asn-269 carries N-linked (GlcNAc...) asparagine glycosylation. A helical transmembrane segment spans residues 281-301 (PANTLASFNSCLNPILYVFLG). At 302 to 323 (QEFRDRLIYSLYASLERALRED) the chain is on the cytoplasmic side.

It belongs to the G-protein coupled receptor 1 family. Expressed in 0.6 % of a subset of sensory neurons located in the apical layer of the vomeronasal organ. Each neuron appears to express only one receptor gene.

The protein localises to the cell membrane. May have an olfactory function associated with the identification of pathogens or of pathogenic states. This is Formyl peptide receptor-related sequence 4 (Fpr-rs4) from Mus musculus (Mouse).